The chain runs to 75 residues: Sperm-specific protein PL-I (75 aa).

Residues 2-74 (GSSGMMSMVA…GSAGWVLVPK (73 aa)) enclose the H15 domain.

Belongs to the histone H1/H5 family. Sperm.

The protein localises to the nucleus. It is found in the chromosome. Functionally, linker histones are implicated in chromatin remodeling and/or transcriptional regulation during spermiogenesis, the process of spermatid maturation into spermatozoa. The chain is Sperm-specific protein PL-I from Spisula solidissima (Atlantic surf-clam).